The chain runs to 352 residues: Protein TIFY 6B (352 aa).

Residues 1–71 (MERDFLGLGS…KSGNYHLPHS (71 aa)) form a disordered region. The segment covering 17–26 (VKEETSESSR) has biased composition (basic and acidic residues). Polar residues predominate over residues 34 to 54 (MNWSFSNKVSASSSQFLSFRP). Positions 172–207 (PIGSPAQLTIFYAGSVCVYDDISPEKAKAIMLLAGN) constitute a Tify domain. The Jas motif lies at 302 to 326 (PLARKASLARFLEKRKERVTSVSPY). Positions 304–311 (ARKASLAR) match the Nuclear localization signal motif.

It belongs to the TIFY/JAZ family. As to quaternary structure, homo- and heterodimer. Interacts with COI1, MYC2, MYC3, MYC4, TIFY10A/JAZ1, TIFY10B/JAZ2, TIFY6A/JAZ4, TIFY5A/JAZ8, TIFY7/JAZ9, TIFY9/JAZ10 and TIFY3A/JAZ11. Interacts (via TIFY domain) with AFPH2/NINJA. In terms of processing, ubiquitinated. Targeted for degradation by the SCF(COI1) E3 ubiquitin ligase-proteasome pathway during jasmonate signaling. As to expression, srtongly expressed in root tips.

The protein localises to the nucleus. Repressor of jasmonate responses. Jasmonoyl-isoleucine (JA-Ile) specifically promotes COI1-TIFY6B/JAZ3 interaction. Acts as a negative regulator of MYC2 function. Feed-back regulated by MYC2. The protein is Protein TIFY 6B (TIFY6B) of Arabidopsis thaliana (Mouse-ear cress).